A 219-amino-acid chain; its full sequence is Small ribosomal subunit protein uS3c (219 aa).

The KH type-2 domain maps to 43-118 (IKNYVQKNMK…KLNIAITRIA (76 aa)).

Belongs to the universal ribosomal protein uS3 family. Part of the 30S ribosomal subunit.

The protein localises to the plastid. The protein resides in the chloroplast. This is Small ribosomal subunit protein uS3c (rps3) from Panax ginseng (Korean ginseng).